A 461-amino-acid polypeptide reads, in one-letter code: Dihydrolipoyl dehydrogenase (461 aa).

Residues Glu34 to Cys42, Lys51, and Gly114 each bind FAD. Cys42 and Cys47 are joined by a disulfide. NAD(+)-binding positions include Gly177–Ile181, Glu200, and Ala261–Arg264. FAD-binding residues include Asp304 and Ala312. The active-site Proton acceptor is His436.

Belongs to the class-I pyridine nucleotide-disulfide oxidoreductase family. FAD is required as a cofactor.

The protein resides in the cytoplasm. The enzyme catalyses N(6)-[(R)-dihydrolipoyl]-L-lysyl-[protein] + NAD(+) = N(6)-[(R)-lipoyl]-L-lysyl-[protein] + NADH + H(+). The branched-chain alpha-keto dehydrogenase complex catalyzes the overall conversion of alpha-keto acids to acyl-CoA and CO(2). It contains multiple copies of 3 enzymatic components: branched-chain alpha-keto acid decarboxylase (E1), lipoamide acyltransferase (E2) and lipoamide dehydrogenase (E3). The protein is Dihydrolipoyl dehydrogenase (lpdA) of Chlamydia pneumoniae (Chlamydophila pneumoniae).